The chain runs to 159 residues: Outer envelope pore protein 16-3, chloroplastic/mitochondrial (159 aa).

N-acetylmethionine is present on methionine 1. Residues 1 to 65 (MDPAEMRYLE…IRTLKMMGTH (65 aa)) form a contains beta strands region. Helical transmembrane passes span 24-40 (ITGFGAGTIYGTILATW), 62-79 (MGTHGLTFAAIGGVYIGV), and 92-109 (FYNGAIGGFVAGASVLGY).

The protein belongs to the Tim17/Tim22/Tim23 family. Plastid outer envelope porin OEP16 (TC 1.B.30) subfamily. As to quaternary structure, homodimer and oligomers in membrane. Part of both the NADH-ubiquinone oxidoreductase complex I and of the TIM17:23 complex. Interacts with TIM23-2.

It is found in the plastid. The protein localises to the chloroplast outer membrane. The protein resides in the mitochondrion outer membrane. It localises to the mitochondrion inner membrane. In terms of biological role, voltage-dependent high-conductance channel with a slight cation-selectivity; selective for amino acids but excludes triosephosphates or uncharged sugars. Non-essential amino acid-selective channel protein and translocation pore for NADPH:protochlorophyllide oxidoreductase A (PORA) and possibly PORB. In Arabidopsis thaliana (Mouse-ear cress), this protein is Outer envelope pore protein 16-3, chloroplastic/mitochondrial (OEP163).